The sequence spans 107 residues: Ig kappa chain V-VI region XRPC 44 (107 aa).

The segment at 1-23 is framework-1; it reads EIVLTQSPAITAASLGQKVTITC. The cysteines at positions 23 and 87 are disulfide-linked. Residues 24–33 form a complementarity-determining-1 region; the sequence is SASSSVSYMH. A framework-2 region spans residues 34 to 48; the sequence is WYQQKSGTSPKPWIY. Residues 49 to 55 are complementarity-determining-2; that stretch reads EISKLAS. Residues 56 to 87 are framework-3; it reads GVPARFSGSGSGTSYSLTISSMEAEDAAIYYC. The interval 88 to 96 is complementarity-determining-3; that stretch reads QQWNYPLWT. A framework-4 region spans residues 97-106; sequence FGGGTKLEIK.

The chain is Ig kappa chain V-VI region XRPC 44 from Mus musculus (Mouse).